A 169-amino-acid chain; its full sequence is Large ribosomal subunit protein uL10 (169 aa).

This sequence belongs to the universal ribosomal protein uL10 family. As to quaternary structure, part of the ribosomal stalk of the 50S ribosomal subunit. The N-terminus interacts with L11 and the large rRNA to form the base of the stalk. The C-terminus forms an elongated spine to which L12 dimers bind in a sequential fashion forming a multimeric L10(L12)X complex.

Forms part of the ribosomal stalk, playing a central role in the interaction of the ribosome with GTP-bound translation factors. This Rickettsia peacockii (strain Rustic) protein is Large ribosomal subunit protein uL10.